The primary structure comprises 614 residues: UvrABC system protein C (614 aa).

The GIY-YIG domain maps to 25-103 (SVPGVYKMFG…IKSLKPKYNI (79 aa)). The UVR domain occupies 214-249 (KEIQCELFEMMCRFSNNQDYESAIVCRDRLHALKSM).

The protein belongs to the UvrC family. In terms of assembly, interacts with UvrB in an incision complex.

The protein localises to the cytoplasm. In terms of biological role, the UvrABC repair system catalyzes the recognition and processing of DNA lesions. UvrC both incises the 5' and 3' sides of the lesion. The N-terminal half is responsible for the 3' incision and the C-terminal half is responsible for the 5' incision. The protein is UvrABC system protein C of Anaplasma phagocytophilum (strain HZ).